Reading from the N-terminus, the 624-residue chain is Double-stranded RNA-binding protein Staufen homolog 2 (624 aa).

DRBM domains follow at residues 55–122 (STSI…NGLA), 142–228 (QRAN…SEIS), 254–321 (MKSF…PEYG), 354–422 (RRRE…IADQ), and 540–604 (LTCL…EKAD). The tract at residues 197–223 (LRNEPIPERSSLNGEANRGPEEDKDAN) is disordered. Residues 214-223 (RGPEEDKDAN) show a composition bias toward basic and acidic residues. 2 disordered regions span residues 401-428 (EKTG…TPKG) and 592-624 (PFEQ…KAVV). The span at 415-426 (QNSGIADQTSTP) shows a compositional bias: polar residues. Residues 596 to 605 (AKLRGEKADN) show a composition bias toward basic and acidic residues.

RNA-binding protein required for the microtubule-dependent transport of RNAs within polarized cell types. The polypeptide is Double-stranded RNA-binding protein Staufen homolog 2 (stau2) (Xenopus tropicalis (Western clawed frog)).